A 533-amino-acid polypeptide reads, in one-letter code: CTP synthase (533 aa).

The tract at residues 1–269 (MKKNLKILVI…HEILSSKLNI (269 aa)) is amidoligase domain. Position 16 (Ser16) interacts with CTP. Ser16 lines the UTP pocket. Residues 17 to 22 (GIGKGV) and Asp73 contribute to the ATP site. Asp73 and Glu143 together coordinate Mg(2+). Residues 150–152 (DME), 190–195 (KSKPTQ), and Lys226 each bind CTP. UTP is bound by residues 190–195 (KSKPTQ) and Lys226. The Glutamine amidotransferase type-1 domain occupies 304-533 (YAELDDSYAS…LFLGLIKACI (230 aa)). Gly355 provides a ligand contact to L-glutamine. Cys382 functions as the Nucleophile; for glutamine hydrolysis in the catalytic mechanism. Residues 383 to 386 (LGLQ), Glu406, and Arg466 each bind L-glutamine. Residues His511 and Glu513 contribute to the active site.

This sequence belongs to the CTP synthase family. In terms of assembly, homotetramer.

It catalyses the reaction UTP + L-glutamine + ATP + H2O = CTP + L-glutamate + ADP + phosphate + 2 H(+). The catalysed reaction is L-glutamine + H2O = L-glutamate + NH4(+). It carries out the reaction UTP + NH4(+) + ATP = CTP + ADP + phosphate + 2 H(+). The protein operates within pyrimidine metabolism; CTP biosynthesis via de novo pathway; CTP from UDP: step 2/2. With respect to regulation, allosterically activated by GTP, when glutamine is the substrate; GTP has no effect on the reaction when ammonia is the substrate. The allosteric effector GTP functions by stabilizing the protein conformation that binds the tetrahedral intermediate(s) formed during glutamine hydrolysis. Inhibited by the product CTP, via allosteric rather than competitive inhibition. Catalyzes the ATP-dependent amination of UTP to CTP with either L-glutamine or ammonia as the source of nitrogen. Regulates intracellular CTP levels through interactions with the four ribonucleotide triphosphates. This Borreliella afzelii (strain PKo) (Borrelia afzelii) protein is CTP synthase.